Reading from the N-terminus, the 100-residue chain is Guanine nucleotide exchange factor MSS4 homolog (100 aa).

The MSS4 domain maps to 1–100 (MSNLRIVCQH…YLLLCSLEKN (100 aa)). Zn(2+) contacts are provided by Cys-8, Cys-11, Cys-73, and Cys-76.

The protein belongs to the DSS4/MSS4 family.

Its function is as follows. Guanine-nucleotide-releasing protein that acts on members of the sec4/ypt1/rab subfamily. The sequence is that of Guanine nucleotide exchange factor MSS4 homolog from Schizosaccharomyces pombe (strain 972 / ATCC 24843) (Fission yeast).